We begin with the raw amino-acid sequence, 162 residues long: Large ribosomal subunit protein uL10 (162 aa).

The protein belongs to the universal ribosomal protein uL10 family. In terms of assembly, part of the ribosomal stalk of the 50S ribosomal subunit. The N-terminus interacts with L11 and the large rRNA to form the base of the stalk. The C-terminus forms an elongated spine to which L12 dimers bind in a sequential fashion forming a multimeric L10(L12)X complex.

Forms part of the ribosomal stalk, playing a central role in the interaction of the ribosome with GTP-bound translation factors. This chain is Large ribosomal subunit protein uL10, found in Vibrio cholerae serotype O1 (strain ATCC 39541 / Classical Ogawa 395 / O395).